The sequence spans 868 residues: Probable mixed-linked glucan synthase 3 (868 aa).

The segment at 36–68 is disordered; the sequence is ERKAAGGGGGGAKGKHWAAADKGERRAAKECGG. Positions 53-68 are enriched in basic and acidic residues; it reads AAADKGERRAAKECGG. The next 2 membrane-spanning stretches (helical) occupy residues 86–106 and 116–136; these read LLHP…LFFG and IMWF…SWLL. Aspartate 211 is an active-site residue. Substrate contacts are provided by aspartate 412 and aspartate 414. Aspartate 573 is a catalytic residue. Transmembrane regions (helical) follow at residues 649-669, 686-706, 717-737, 771-791, 810-830, and 838-858; these read IYPV…MWLI, LLVI…WAGI, FFMI…VVNL, MLIP…VAIG, MGLL…LAIM, and IILV…YVAT.

The protein belongs to the glycosyltransferase 2 family. Plant cellulose synthase-like F subfamily.

The protein resides in the golgi apparatus membrane. May catalyze both beta-1,3 and beta-1,4 glycosidic linkage on beta-D-glucan. Essential for (1,3;1,4)-beta-D-glucans synthesis in grasses and cereals (Poaceae). The mixed-linked glucans (which are not present in walls of dicotyledons or most other monocotyledonous plants) are particularly important constituents of the walls of the starchy endosperm and aleurone cells of cereal grains such as oats, wheat, rice and barley. They can account for up to 70% by weight of the wall. This chain is Probable mixed-linked glucan synthase 3 (CSLF3), found in Oryza sativa subsp. japonica (Rice).